A 288-amino-acid polypeptide reads, in one-letter code: Protein FANTASTIC FOUR 3 (288 aa).

The segment covering 48-60 (HAEDTRNRNDDKA) has biased composition (basic and acidic residues). Disordered stretches follow at residues 48-100 (HAED…YYVQ), 146-172 (ETTT…PLTT), and 222-261 (NEFV…IENV). The span at 66–90 (SDSSGWSSLQSLSSGSSSSTKTTTS) shows a compositional bias: low complexity. Positions 165 to 217 (DLPPPLTTMRGFQCIQMRPHRENGRLVMTATNAPPRNGCFQADRSNGRLRLSI) constitute an FAF domain. The segment covering 223–256 (EFVENEEETIEPEETEEYEEEEEEEEDEDEDEVM) has biased composition (acidic residues).

The protein belongs to the fantastic four family. As to expression, expressed in the shoot apex, stamens, young leaves and young siliques, but not in old leaves. Detected in provascular and vascular tissue, but not in the vegetative meristem. In inflorescences, restricted to the vasculature and absent from young flowers, except from anthers.

In terms of biological role, able to repress WUS when constitutively overexpressed, but have no effect on CLV3. This is Protein FANTASTIC FOUR 3 (FAF3) from Arabidopsis thaliana (Mouse-ear cress).